The primary structure comprises 516 residues: Facilitated glucose transporter homolog (516 aa).

The disordered stretch occupies residues 1–37; the sequence is MNAVVASQNKNDRSFSNMESESSSNVEKSEKENHHQS. At 1 to 47 the chain is on the cytoplasmic side; the sequence is MNAVVASQNKNDRSFSNMESESSSNVEKSEKENHHQSLPDENWTPFL. Positions 14-26 are enriched in low complexity; sequence SFSNMESESSSNV. Residues 27 to 37 are compositionally biased toward basic and acidic residues; the sequence is EKSEKENHHQS. A helical transmembrane segment spans residues 48 to 68; it reads FFCISSIALASFQDGFQIGCI. The Extracellular segment spans residues 69–101; sequence NAPGPLIIDWIKKCHFELFGEVLSQYQADFIWS. A helical membrane pass occupies residues 102-122; that stretch reads VAVSMFSVGGMFGSFCSGFLA. The Cytoplasmic portion of the chain corresponds to 123–138; the sequence is DKFGRKSTLLYNNILA. The chain crosses the membrane as a helical span at residues 139-159; sequence LLAAVCLSTSKLFNFYPMIVF. Residues 160 to 161 are Extracellular-facing; sequence GR. Residues 162 to 182 form a helical membrane-spanning segment; the sequence is FLVGLNCGITSGLVPMFLTEL. Topologically, residues 183 to 200 are cytoplasmic; that stretch reads APANLRGKCGSFHQLNIS. Residues 201–221 traverse the membrane as a helical segment; that stretch reads VAIVLSQALGLPQIFGTQVGW. Position 222 (proline 222) is a topological domain, extracellular. A helical transmembrane segment spans residues 223-243; sequence YIFACVAIPTFLQLATIPFCV. The Cytoplasmic segment spans residues 244 to 306; it reads ESPKYLISKL…SLFKGDNQWP (63 aa). Residues 307–327 form a helical membrane-spanning segment; the sequence is MIVSILMMFSQQFSGISAVTF. Residues 328–344 lie on the Extracellular side of the membrane; that stretch reads YSTLIFKRNGLSGNEPM. Residues 345-365 traverse the membrane as a helical segment; sequence YATVGFGCIKLIATFGCLFLI. Over 366–376 the chain is Cytoplasmic; the sequence is DHPKFGRKRLH. The chain crosses the membrane as a helical span at residues 377 to 397; the sequence is IAGLSGMCISSILIVITLTLS. Over 398 to 409 the chain is Extracellular; the sequence is NAGYHWASYMNV. The helical transmembrane segment at 410-430 threads the bilayer; sequence LFILSFVVTFAFGPGPIPWFF. The Cytoplasmic portion of the chain corresponds to 431–444; it reads TSELFDSATRGRAA. The chain crosses the membrane as a helical span at residues 445–465; sequence AVSATSNWVANWMVGLTFLPI. Topologically, residues 466-471 are extracellular; the sequence is NNIIHQ. The helical transmembrane segment at 472 to 492 threads the bilayer; sequence YAFLMFTFFTFTFAIFTWKFV. Over 493–516 the chain is Cytoplasmic; the sequence is PETKGKSPSAIRKELAFMRKRICS.

Belongs to the major facilitator superfamily. Sugar transporter (TC 2.A.1.1) family. Expressed in seam cells from the early embryonic stage through the L2 stage (at protein level).

It is found in the cell membrane. In terms of biological role, appears to have no transport activity for glucose. This is Facilitated glucose transporter homolog from Caenorhabditis elegans.